The following is a 440-amino-acid chain: COP9 signalosome complex subunit 5 (440 aa).

The 148-residue stretch at 71–218 (VLISKLSCEK…MGAFRTIESK (148 aa)) folds into the MPN domain. Zn(2+)-binding residues include His164, His166, and Asp177. The short motif at 164–177 (HSHPGYDCWLSNID) is the JAMM motif element. Residues 319-341 (TQRGDSTETSSFGSMFSGDNTSD) are compositionally biased toward polar residues. Disordered stretches follow at residues 319-343 (TQRG…SDVD) and 375-399 (SSRS…CHDE).

Belongs to the peptidase M67A family. CSN5 subfamily. Component of a COP9 signalosome-like (CSN) complex, composed of at least RRI1/CSN5, CSN9, RRI2/CSN10, PCI8/CSN11, CSN12 and CSI1. Within this complex it probably interacts directly with CSN12. Also interacts with RPN5. A divalent metal cation serves as cofactor.

It is found in the cytoplasm. Its subcellular location is the nucleus. Catalytic component of the COP9 signalosome (CSN) complex that acts as an regulator of the ubiquitin (Ubl) conjugation pathway by mediating the deneddylation of the cullin subunit of SCF-type E3 ubiquitin-protein ligase complexes. The CSN complex is involved in the regulation of the mating pheromone response. This Saccharomyces cerevisiae (strain ATCC 204508 / S288c) (Baker's yeast) protein is COP9 signalosome complex subunit 5 (RRI1).